Here is a 1071-residue protein sequence, read N- to C-terminus: Tricorn protease (1071 aa).

The segment at 39 to 310 (MPNLLLNPDI…EKIEKIEIGD (272 aa)) is six-bladed beta propeller. Residues 131-132 (RR) are binds the substrate's C-terminus. Residues 326–675 (AEDFSPLDGD…EDERTVETDK (350 aa)) form a seven-bladed beta propeller region. The interval 679-745 (VSSIHEEFLQ…VEMQGEYRTS (67 aa)) is C-1; helical bundle. The active-site Charge relay system is histidine 746. Residues 761-855 (RSGRIACDFK…DLMIDILDDD (95 aa)) are PDZ-like. The tract at residues 856-1061 (RFIRYRSWVE…IDALIEELRN (206 aa)) is C-2; alpha-beta sandwich. Residue 916 to 918 (GGG) participates in substrate binding. Serine 965 serves as the catalytic Nucleophile. 993–995 (GIT) contacts substrate. The Charge relay system role is filled by glutamate 1023.

This sequence belongs to the peptidase S41B family. Part of the Tricorn proteolytic complex. Assembles to form a hexameric toroid, 20 copies of which may then assemble to form an icosahedral supermolecule of 14.6 MDa.

It localises to the cytoplasm. Tricorn degrades oligopeptides (probably derived from the proteasome) and channels the products to F1, F2 and F3 proteases, which then catalyze the terminal degradation step, yielding free amino acids. This is Tricorn protease (tri) from Thermoplasma acidophilum (strain ATCC 25905 / DSM 1728 / JCM 9062 / NBRC 15155 / AMRC-C165).